The chain runs to 268 residues: NADH-quinone oxidoreductase subunit B 1 (268 aa).

[4Fe-4S] cluster-binding residues include cysteine 42, cysteine 43, cysteine 108, and cysteine 138.

This sequence belongs to the complex I 20 kDa subunit family. NDH-1 is composed of 14 different subunits. Subunits NuoB, C, D, E, F, and G constitute the peripheral sector of the complex. It depends on [4Fe-4S] cluster as a cofactor.

It localises to the cell membrane. The enzyme catalyses a quinone + NADH + 5 H(+)(in) = a quinol + NAD(+) + 4 H(+)(out). Its function is as follows. NDH-1 shuttles electrons from NADH, via FMN and iron-sulfur (Fe-S) centers, to quinones in the respiratory chain. The immediate electron acceptor for the enzyme in this species is believed to be ubiquinone. Couples the redox reaction to proton translocation (for every two electrons transferred, four hydrogen ions are translocated across the cytoplasmic membrane), and thus conserves the redox energy in a proton gradient. In Roseiflexus sp. (strain RS-1), this protein is NADH-quinone oxidoreductase subunit B 1.